Here is a 338-residue protein sequence, read N- to C-terminus: Peptidoglycan deacetylase-like protein FGM2 (338 aa).

Positions 49, 124, and 128 each coordinate Zn(2+). In terms of domain architecture, NodB homology spans 65–257 (LSDYSAGIFA…VTNSHGFVSS (193 aa)).

The protein belongs to the polysaccharide deacetylase family.

Peptidoglycan deacetylase-like protein; part of the Fg3_54/C64 gene cluster that mediates the biosynthesis of the octapeptide fusaoctaxin A, a virulence factor that is required for cell-to-cell invasiveness of plant host. The 2 nonribosomal peptide synthetases NRPS9 and NRPS5 form an assembly line which likely utilizes GABA as a starter unit (loaded on the unique module M1 of NRPS9) and sequentially incorporates seven extender units composed of the residues L-Ala, L-allo-Ile, L-Ser, L-Val, L-Ser, L-Leu and L-Leu, respectively. During the process, each of the residues that are tethered on modules M3-M7 of NRPS5 containing an E domain can undergo an epimerization reaction to produce a D-configuration before the transpeptidation reaction occurs. The elongation of the peptidyl chain might be terminated by module M8-mediated L-Leu incorporation, followed by R domain-catalyzed 4 electron reduction to release the resulting octapeptide from the assembly line as an alcohol. Fusaoctaxin A is cleaved by the cluster specific ABC transporter FGM5 to the pentapeptide fusapentaxin A and the tripeptide fusatrixin A. The other enzymes from the cluster, FGM1, FGM2, FGM3 and FGM9 seem not to be involved in the biosynthesis of fusaoctaxin A and their functions have still to be determined. In Gibberella zeae (strain ATCC MYA-4620 / CBS 123657 / FGSC 9075 / NRRL 31084 / PH-1) (Wheat head blight fungus), this protein is Peptidoglycan deacetylase-like protein FGM2.